The following is a 564-amino-acid chain: Kelch repeat and BTB domain-containing protein 1 (564 aa).

The BTB domain occupies 21–88 (CDINIVINDE…IYGIPLSLTN (68 aa)). 6 Kelch repeats span residues 252–297 (IELI…VLDN), 298–346 (IIYM…ADDE), 347–395 (YIYC…MLNG), 397–441 (IYVI…VHDG), 442–492 (KIYI…SAHN), and 494–539 (LYVG…CEPI).

Belongs to the poxviruses Kelch family. In terms of assembly, interacts (via BTB domain) with host CUL3.

Its subcellular location is the host cytoplasm. Functionally, probable substrate-specific adapter of CUL3-containing E3 ubiquitin-protein ligases which mediate the ubiquitination and subsequent proteasomal degradation of host target proteins. In Homo sapiens (Human), this protein is Kelch repeat and BTB domain-containing protein 1 (KBTB1).